The chain runs to 1405 residues: MKDLVKVLKSQAQSEEFDAIKITLASPDMIRSWSYGEVKKPETINYRTFKPERDGLFCAKIFGPVKDYECLCGKYKRMKHRGIICEKCGVEVTKAAVRRERMGHIELAAPVAHIWFLKSLPSRIGMFLDMTLRDIERVLYFESFMVIDPGMTTLERGQLLNDEQYFEALEEFGDDFDARMGAEAVQALLNDVDLDEEIERLREEIPQTNSETKIKKLSKRLKLLEAFQKSGNDPAWMIMEVLPVLPPDLRPLVPLDGGRFATSDLNDLYRRVINRNNRLKRLLDLNAPDIIVRNEKRMLQESVDALLDNGRRGRAITGSNKRPLKSLADMIKGKQGRFRQNLLGKRVDYSGRSVITVGPTLRLHQCGLPKKMALELFKPFIYSKLQAGGQASTIKAAKKMVERELPEVWDILADVIREHPVLLNRAPTLHRLGIQAFEPLLIEGKAIQLHPLVCAAYNADFDGDQMAVHVPLTLEAQLESRTLMMATNNVLSPANGEPIIVPSQDVVLGLYYMTREKIGAPGEGMVFSNLDEVERAFGTQSVSLHARVKVRLTEYDRDEDGGEWTSSTKIHDTTVGRALLYRILPKGMPFELVDQPMKKKAISGLINAVYRRSGLKDTVIFADQLMYTGFRLATWSGASIGVNDFVIPDSKKEIVDGAEEEVKEIENQFSSGLVTAGEKYNKVIDIWSKANDKVAKAMMAGISKETAIDREGNEVEQDSFNSVFIMADSGARGSAAQIRQLAGMRGLMAKPDGSIIETPITANFREGLNVLQYFISTHGARKGLADTALKTANSGYLTRRLVDVSQDLVITEEDCGTEDGLTLHPVIEGGDVIVSLAQRVLGRVVAQDVVDPATDDVLIARGTLLDEAWCARLDTMGVDEIVVRSAITCETAHGVCSACYGRDLARGHQVNVGEAVGVIAAQSIGEPGTQLTMRTFHIGGAASRASAVDSVQVKHGGTVRLHNIKHVERSDGKLVVVSRSSALAVADEHGREREYYKLPYGAELSVRDGDMVEAGTPVAKWDPHTHPVVAEVEGKVQFSDMEEGLTIHRSVDEMTGLSNIEVIESASRPASGRDKRPMIMLLDENGGHVTLPGSNTPVQYMLPGKAIISVENGGQVGVGEVIARIPVEASGNKDITGGLPRVADLFEARKPKEPAILAEVTGTISFGKETKGKRRLTITPEEGDPLEMLIPKWRQIGVFEGETVEKGEVISDGPSNPHDILRLLGVAELAKYITAEIQDVYRLQGVVIDDKHIEVIVRQMLRKVEITDSGDSSFITGDQVEFVRVLEENQRLAQEDKFPAKYDRLLLGITKASLATESFISAASFQETTRVLTEAAVTGKRDYLRGLKENVVVGRLVPAGTGLAHHAERRRRREDPESTANPSAFDVEQELGAQLTALDAEDDDL.

Positions 70, 72, 85, and 88 each coordinate Zn(2+). Mg(2+) is bound by residues Asp-460, Asp-462, and Asp-464. Cys-815, Cys-889, Cys-896, and Cys-899 together coordinate Zn(2+). Residues 1363-1388 (LAHHAERRRRREDPESTANPSAFDVE) are disordered.

It belongs to the RNA polymerase beta' chain family. The RNAP catalytic core consists of 2 alpha, 1 beta, 1 beta' and 1 omega subunit. When a sigma factor is associated with the core the holoenzyme is formed, which can initiate transcription. Requires Mg(2+) as cofactor. The cofactor is Zn(2+).

It catalyses the reaction RNA(n) + a ribonucleoside 5'-triphosphate = RNA(n+1) + diphosphate. In terms of biological role, DNA-dependent RNA polymerase catalyzes the transcription of DNA into RNA using the four ribonucleoside triphosphates as substrates. This Chromohalobacter salexigens (strain ATCC BAA-138 / DSM 3043 / CIP 106854 / NCIMB 13768 / 1H11) protein is DNA-directed RNA polymerase subunit beta'.